The primary structure comprises 220 residues: Large ribosomal subunit protein uL1 (220 aa).

The protein belongs to the universal ribosomal protein uL1 family. Part of the 50S ribosomal subunit.

Binds directly to 23S rRNA. The L1 stalk is quite mobile in the ribosome, and is involved in E site tRNA release. In terms of biological role, protein L1 is also a translational repressor protein, it controls the translation of the L11 operon by binding to its mRNA. This chain is Large ribosomal subunit protein uL1, found in Ehrlichia canis (strain Jake).